We begin with the raw amino-acid sequence, 364 residues long: DNA replication and repair protein RecF (364 aa).

30–37 (GNNAQGKT) provides a ligand contact to ATP.

Belongs to the RecF family.

Its subcellular location is the cytoplasm. Its function is as follows. The RecF protein is involved in DNA metabolism; it is required for DNA replication and normal SOS inducibility. RecF binds preferentially to single-stranded, linear DNA. It also seems to bind ATP. This Clostridium botulinum (strain 657 / Type Ba4) protein is DNA replication and repair protein RecF.